The primary structure comprises 205 residues: Putative C-type lectin protein FPV001/FPV260 (205 aa).

The 104-residue stretch at 84–187 folds into the C-type lectin domain; the sequence is CPRDWISHNG…CSVRRYLVCK (104 aa).

This chain is Putative C-type lectin protein FPV001/FPV260, found in Fowlpox virus (strain NVSL) (FPV).